The primary structure comprises 353 residues: Photosystem II D2 protein (353 aa).

At Thr-2 the chain carries N-acetylthreonine. The residue at position 2 (Thr-2) is a Phosphothreonine. A helical membrane pass occupies residues 41–61 (CAYFALGGWFTGTTFVTSWYT). His-118 is a chlorophyll a binding site. Residues 125-141 (GFMLRQFELARSVQLRP) form a helical membrane-spanning segment. The pheophytin a site is built by Gln-130 and Asn-143. The helical transmembrane segment at 153-166 (VFVSVFFIYPLGQS) threads the bilayer. Chlorophyll a is bound at residue His-198. The chain crosses the membrane as a helical span at residues 208–228 (AALLCAIHGATVENTLFEDGD). A plastoquinone is bound by residues His-215 and Phe-262. Residue His-215 coordinates Fe cation. Residue His-269 coordinates Fe cation. The chain crosses the membrane as a helical span at residues 279 to 295 (GLWMSALGVVGLALNLR).

This sequence belongs to the reaction center PufL/M/PsbA/D family. As to quaternary structure, PSII is composed of 1 copy each of membrane proteins PsbA, PsbB, PsbC, PsbD, PsbE, PsbF, PsbH, PsbI, PsbJ, PsbK, PsbL, PsbM, PsbT, PsbX, PsbY, PsbZ, Psb30/Ycf12, at least 3 peripheral proteins of the oxygen-evolving complex and a large number of cofactors. It forms dimeric complexes. The D1/D2 heterodimer binds P680, chlorophylls that are the primary electron donor of PSII, and subsequent electron acceptors. It shares a non-heme iron and each subunit binds pheophytin, quinone, additional chlorophylls, carotenoids and lipids. There is also a Cl(-1) ion associated with D1 and D2, which is required for oxygen evolution. The PSII complex binds additional chlorophylls, carotenoids and specific lipids. is required as a cofactor.

It is found in the plastid membrane. It carries out the reaction 2 a plastoquinone + 4 hnu + 2 H2O = 2 a plastoquinol + O2. Photosystem II (PSII) is a light-driven water:plastoquinone oxidoreductase that uses light energy to abstract electrons from H(2)O, generating O(2) and a proton gradient subsequently used for ATP formation. It consists of a core antenna complex that captures photons, and an electron transfer chain that converts photonic excitation into a charge separation. The D1/D2 (PsbA/PsbD) reaction center heterodimer binds P680, the primary electron donor of PSII as well as several subsequent electron acceptors. D2 is needed for assembly of a stable PSII complex. The polypeptide is Photosystem II D2 protein (Cuscuta exaltata (Tall dodder)).